The sequence spans 413 residues: Exodeoxyribonuclease I (413 aa).

In terms of domain architecture, Exonuclease spans 12–193 (LFYDYETFGI…VSDVYATIEI (182 aa)). Positions 15, 17, and 186 each coordinate Mg(2+). Glu17 contributes to the substrate binding site. Residues 202 to 349 (PRLFDFFFKI…QNIKIIFSKN (148 aa)) form the ExoI SH3-like domain. Positions 350 to 413 (NNTNQFFNVD…RYRARNFFIH (64 aa)) constitute an ExoI C-terminal domain.

In terms of assembly, monomer. Interacts with ssb (via C-terminus); this interaction stimulates the exonuclease activity by recruiting the enzyme to its substrate. Mg(2+) is required as a cofactor.

It carries out the reaction Exonucleolytic cleavage in the 3'- to 5'-direction to yield nucleoside 5'-phosphates.. Functionally, degrades single-stranded DNA (ssDNA) in a highly processive manner. Also functions as a DNA deoxyribophosphodiesterase that releases deoxyribose-phosphate moieties following the cleavage of DNA at an apurinic/apyrimidinic (AP) site by either an AP endonuclease or AP lyase. The protein is Exodeoxyribonuclease I (sbcB) of Buchnera aphidicola subsp. Acyrthosiphon pisum (strain APS) (Acyrthosiphon pisum symbiotic bacterium).